We begin with the raw amino-acid sequence, 299 residues long: tRNA dimethylallyltransferase (299 aa).

13–20 (GPTASGKT) serves as a coordination point for ATP. 15–20 (TASGKT) is a binding site for substrate. Residues 38-41 (DSRQ) are interaction with substrate tRNA.

This sequence belongs to the IPP transferase family. As to quaternary structure, monomer. Mg(2+) serves as cofactor.

The enzyme catalyses adenosine(37) in tRNA + dimethylallyl diphosphate = N(6)-dimethylallyladenosine(37) in tRNA + diphosphate. In terms of biological role, catalyzes the transfer of a dimethylallyl group onto the adenine at position 37 in tRNAs that read codons beginning with uridine, leading to the formation of N6-(dimethylallyl)adenosine (i(6)A). This Prochlorococcus marinus subsp. pastoris (strain CCMP1986 / NIES-2087 / MED4) protein is tRNA dimethylallyltransferase.